A 142-amino-acid chain; its full sequence is Ribosome-binding factor A (142 aa).

Positions 120-142 are disordered; the sequence is TLGEVQSESDQPTTYETTTVNKT. Positions 123–142 are enriched in polar residues; sequence EVQSESDQPTTYETTTVNKT.

The protein belongs to the RbfA family. As to quaternary structure, monomer. Binds 30S ribosomal subunits, but not 50S ribosomal subunits or 70S ribosomes.

It localises to the cytoplasm. Functionally, one of several proteins that assist in the late maturation steps of the functional core of the 30S ribosomal subunit. Associates with free 30S ribosomal subunits (but not with 30S subunits that are part of 70S ribosomes or polysomes). Required for efficient processing of 16S rRNA. May interact with the 5'-terminal helix region of 16S rRNA. The protein is Ribosome-binding factor A of Prochlorococcus marinus (strain MIT 9313).